The chain runs to 143 residues: Deoxyuridine 5'-triphosphate nucleotidohydrolase (143 aa).

Substrate is bound by residues 62 to 64, asparagine 75, 79 to 81, and lysine 89; these read RSG and TID.

The protein belongs to the dUTPase family. Mg(2+) serves as cofactor.

The catalysed reaction is dUTP + H2O = dUMP + diphosphate + H(+). It functions in the pathway pyrimidine metabolism; dUMP biosynthesis; dUMP from dCTP (dUTP route): step 2/2. Functionally, this enzyme is involved in nucleotide metabolism: it produces dUMP, the immediate precursor of thymidine nucleotides and it decreases the intracellular concentration of dUTP so that uracil cannot be incorporated into DNA. The chain is Deoxyuridine 5'-triphosphate nucleotidohydrolase from Clostridium kluyveri (strain ATCC 8527 / DSM 555 / NBRC 12016 / NCIMB 10680 / K1).